Here is a 689-residue protein sequence, read N- to C-terminus: Beta-adrenergic receptor kinase 1 (689 aa).

Positions 1–190 (MADLEAVLAD…ELNIHLTMND (190 aa)) are N-terminal. Residues 54–175 (TFEKIFSQKL…IESDKFTRFC (122 aa)) form the RGS domain. The Protein kinase domain occupies 191–453 (FSVHRIIGRG…AQEIKESPFF (263 aa)). Residues 197–205 (IGRGGFGEV) and lysine 220 each bind ATP. The active-site Proton acceptor is the aspartate 317. In terms of domain architecture, AGC-kinase C-terminal spans 454-521 (RSLDWQMVFL…TISERWQQEV (68 aa)). The PH domain maps to 558-652 (DCIMHGYMSK…WKKELRDAYR (95 aa)). Serine 670 is subject to Phosphoserine.

It belongs to the protein kinase superfamily. AGC Ser/Thr protein kinase family. GPRK subfamily. In terms of assembly, interacts with the heterodimer formed by GNB1 and GNG2. Interacts with GIT1. Interacts with, and phosphorylates chemokine-stimulated CCR5. Interacts with ARRB1. Interacts with LPAR1 and LPAR2. Interacts with RALA in response to LPAR1 activation. ADRBK1 and RALA mutually inhibit each other's binding to LPAR1. Interacts with ADRB2. In terms of tissue distribution, expressed at low levels in brain cortex, hippocampus, striatum, hypothalamus, cerebellum and brainstem (at protein level).

The protein resides in the cytoplasm. It localises to the cell membrane. Its subcellular location is the postsynapse. The protein localises to the presynapse. It carries out the reaction [beta-adrenergic receptor] + ATP = [beta-adrenergic receptor]-phosphate + ADP + H(+). In contrast to other AGC family kinases, the catalytic activity is solely regulated by the binding of substrates and ligands, not by phosphorylation of the kinase domain. Functionally, specifically phosphorylates the agonist-occupied form of the beta-adrenergic and closely related receptors, probably inducing a desensitization of them. Key regulator of LPAR1 signaling. Competes with RALA for binding to LPAR1 thus affecting the signaling properties of the receptor. Desensitizes LPAR1 and LPAR2 in a phosphorylation-independent manner. Positively regulates ciliary smoothened (SMO)-dependent Hedgehog (Hh) signaling pathway by facilitating the trafficking of SMO into the cilium and the stimulation of SMO activity. Inhibits relaxation of airway smooth muscle in response to blue light. This is Beta-adrenergic receptor kinase 1 from Rattus norvegicus (Rat).